The primary structure comprises 94 residues: Large ribosomal subunit protein bL28A (94 aa).

The segment at 63-94 (GHRGRRRAARAGSAPAHFARQAGSSLRTAAIL) is disordered. Over residues 72-82 (RAGSAPAHFAR) the composition is skewed to low complexity. Residues 84–94 (AGSSLRTAAIL) show a composition bias toward polar residues.

The protein belongs to the bacterial ribosomal protein bL28 family.

The protein is Large ribosomal subunit protein bL28A (rpmB1) of Mycobacterium bovis (strain ATCC BAA-935 / AF2122/97).